The following is a 252-amino-acid chain: uncharacterized protein (252 aa).

Residue 9–33 (LITGGSAGIGLELAKRLLELGNEVI) coordinates NADP(+). A substrate-binding site is contributed by Ser139. The Proton acceptor role is filled by Tyr152.

It belongs to the short-chain dehydrogenases/reductases (SDR) family.

Its subcellular location is the cytoplasm. This is an uncharacterized protein from Bacillus subtilis (strain 168).